Here is a 310-residue protein sequence, read N- to C-terminus: tRNA dimethylallyltransferase (310 aa).

14–21 (GPTASGKS) contacts ATP. 16–21 (TASGKS) serves as a coordination point for substrate. Interaction with substrate tRNA regions lie at residues 39-42 (DSMQ) and 163-167 (QRIVR).

Belongs to the IPP transferase family. As to quaternary structure, monomer. The cofactor is Mg(2+).

It catalyses the reaction adenosine(37) in tRNA + dimethylallyl diphosphate = N(6)-dimethylallyladenosine(37) in tRNA + diphosphate. In terms of biological role, catalyzes the transfer of a dimethylallyl group onto the adenine at position 37 in tRNAs that read codons beginning with uridine, leading to the formation of N6-(dimethylallyl)adenosine (i(6)A). This chain is tRNA dimethylallyltransferase, found in Brucella melitensis biotype 2 (strain ATCC 23457).